The sequence spans 33 residues: Nigrocin-1 (33 aa).

Residues Cys-27 and Cys-33 are joined by a disulfide bond.

It belongs to the frog skin active peptide (FSAP) family. Brevinin subfamily. Expressed by the skin dorsal glands.

It localises to the secreted. Functionally, shows antibacterial activity against both Gram-positive and Gram-negative bacteria and against the fungus C.albicans. Has no hemolytic activity. This is Nigrocin-1 from Pelophylax nigromaculatus (Black-spotted frog).